A 426-amino-acid polypeptide reads, in one-letter code: Adenylosuccinate synthetase (426 aa).

Residues 12–18 and 40–42 contribute to the GTP site; these read GDEGKGK and GHT. Asp-13 (proton acceptor) is an active-site residue. Residues Asp-13 and Gly-40 each coordinate Mg(2+). IMP-binding positions include 13–16, 38–41, Thr-130, Arg-144, Gln-224, Thr-239, and Arg-303; these read DEGK and NAGH. His-41 functions as the Proton donor in the catalytic mechanism. 299 to 305 contributes to the substrate binding site; the sequence is TVTNRVR. GTP contacts are provided by residues Arg-305, 331–333, and 413–415; these read KLD and STG.

The protein belongs to the adenylosuccinate synthetase family. Homodimer. Mg(2+) is required as a cofactor.

The protein localises to the cytoplasm. The enzyme catalyses IMP + L-aspartate + GTP = N(6)-(1,2-dicarboxyethyl)-AMP + GDP + phosphate + 2 H(+). Its pathway is purine metabolism; AMP biosynthesis via de novo pathway; AMP from IMP: step 1/2. Its function is as follows. Plays an important role in the de novo pathway of purine nucleotide biosynthesis. Catalyzes the first committed step in the biosynthesis of AMP from IMP. The polypeptide is Adenylosuccinate synthetase (Anaplasma marginale (strain St. Maries)).